A 512-amino-acid chain; its full sequence is Kynurenine 3-monooxygenase (512 aa).

It belongs to the aromatic-ring hydroxylase family. KMO subfamily. FAD serves as cofactor.

Its subcellular location is the mitochondrion outer membrane. The enzyme catalyses L-kynurenine + NADPH + O2 + H(+) = 3-hydroxy-L-kynurenine + NADP(+) + H2O. It functions in the pathway cofactor biosynthesis; NAD(+) biosynthesis; quinolinate from L-kynurenine: step 1/3. Catalyzes the hydroxylation of L-kynurenine (L-Kyn) to form 3-hydroxy-L-kynurenine (L-3OHKyn). Required for synthesis of quinolinic acid. This is Kynurenine 3-monooxygenase (nic-3) from Neurospora crassa (strain ATCC 24698 / 74-OR23-1A / CBS 708.71 / DSM 1257 / FGSC 987).